The primary structure comprises 621 residues: MSFDIAKYPTLALVPDPDDLRLLPKESLPTLCDELRQYLLNSVSRSSGHFASGLGAVELTVALHYVYQTPFDSLIWDVGHQAYPHKILTGRRDRIATIRQKGGLHPFPWRDESEYDTLSVGHSSTSISAGLGMAVAAEREGLGRRTVCVIGDGAMTAGMAFEAMNHAGDIKADMLVVLNDNEMSISENVGALNNHLAQLLSGKLYASLREGGKKMLSGLPPIKELVKRTEEHLKGMVVPGTLFEELGFNYIGPVDGHDVQALVATLKNMRDLKGPQLLHIMTKKGKGYAPAEKDPISWHAVPKFDPASGTLPKSSGTLPTYSKIFGDWLCETAHNDDRLMGITPAMREGSGMVRFSREYPQQYFDVAIAEQHAVTFGAGLAIGGYHPVVAIYSSFLQRAYDQVIHDVAIQRLPVLFAIDRGGIVGADGQTHQGAFDLSFLRCIPNLVIMTPSDENECRQMLQTGYEYREGPSAVRYPRGTGTGAPLTPPQALPIGKGVLRRRGERIAILNFGSLLPQALEAAERLNASVADMRFVKPLDDALVRSLAEQHEYLVTLEENAVMGGAGSGVNELLMQLRLPRPVLNIGLQDSFVPQGSQEEIRRDLQLDADGILAQLEGWLAR.

Thiamine diphosphate is bound by residues His-80 and 121–123 (GHS). Asp-152 contributes to the Mg(2+) binding site. Thiamine diphosphate contacts are provided by residues 153–154 (GA), Asn-181, Tyr-288, and Glu-370. Asn-181 lines the Mg(2+) pocket.

The protein belongs to the transketolase family. DXPS subfamily. Homodimer. It depends on Mg(2+) as a cofactor. The cofactor is thiamine diphosphate.

The catalysed reaction is D-glyceraldehyde 3-phosphate + pyruvate + H(+) = 1-deoxy-D-xylulose 5-phosphate + CO2. It participates in metabolic intermediate biosynthesis; 1-deoxy-D-xylulose 5-phosphate biosynthesis; 1-deoxy-D-xylulose 5-phosphate from D-glyceraldehyde 3-phosphate and pyruvate: step 1/1. In terms of biological role, catalyzes the acyloin condensation reaction between C atoms 2 and 3 of pyruvate and glyceraldehyde 3-phosphate to yield 1-deoxy-D-xylulose-5-phosphate (DXP). The sequence is that of 1-deoxy-D-xylulose-5-phosphate synthase from Edwardsiella ictaluri (strain 93-146).